A 160-amino-acid polypeptide reads, in one-letter code: Ribosome maturation factor RimP (160 aa).

The protein belongs to the RimP family.

It localises to the cytoplasm. Required for maturation of 30S ribosomal subunits. This is Ribosome maturation factor RimP from Symbiobacterium thermophilum (strain DSM 24528 / JCM 14929 / IAM 14863 / T).